We begin with the raw amino-acid sequence, 287 residues long: Diaminopimelate epimerase (287 aa).

Residues N15 and N66 each contribute to the substrate site. The active-site Proton donor is C75. Substrate contacts are provided by residues 76-77 (GN), N170, N203, and 221-222 (ER). C230 acts as the Proton acceptor in catalysis. Residue 231–232 (GT) coordinates substrate.

The protein belongs to the diaminopimelate epimerase family. As to quaternary structure, homodimer.

The protein localises to the cytoplasm. The catalysed reaction is (2S,6S)-2,6-diaminopimelate = meso-2,6-diaminopimelate. It participates in amino-acid biosynthesis; L-lysine biosynthesis via DAP pathway; DL-2,6-diaminopimelate from LL-2,6-diaminopimelate: step 1/1. Functionally, catalyzes the stereoinversion of LL-2,6-diaminopimelate (L,L-DAP) to meso-diaminopimelate (meso-DAP), a precursor of L-lysine and an essential component of the bacterial peptidoglycan. In Desulfovibrio desulfuricans (strain ATCC 27774 / DSM 6949 / MB), this protein is Diaminopimelate epimerase.